Reading from the N-terminus, the 386-residue chain is Protein phosphatase methylesterase 1 (386 aa).

Residues 1-38 (MSALEKSMHLGRLPSRPPLPGSGGSQSGAKMRMGPGRK) form a disordered region. Ser-15 is modified (phosphoserine). At Arg-16 the chain carries Asymmetric dimethylarginine; alternate. Arg-16 bears the Omega-N-methylarginine; alternate mark. Residue Ser-156 is part of the active site. A compositionally biased stretch (acidic residues) spans 255–265 (IEEEEEDEEGS). The disordered stretch occupies residues 255–280 (IEEEEEDEEGSESVNKRKKEDDMETK). Over residues 268 to 280 (VNKRKKEDDMETK) the composition is skewed to basic and acidic residues. The active site involves His-349.

This sequence belongs to the AB hydrolase superfamily. Binds PPP2CA and PPP2CB. Phosphorylated by SIK1 following increases in intracellular sodium, leading to dissociation from the protein phosphatase 2A (PP2A) complex and subsequent dephosphorylation of sodium/potassium-transporting ATPase ATP1A1.

It carries out the reaction [phosphatase 2A protein]-C-terminal L-leucine methyl ester + H2O = [phosphatase 2A protein]-C-terminal L-leucine + methanol + H(+). In terms of biological role, demethylates proteins that have been reversibly carboxymethylated. Demethylates PPP2CB (in vitro) and PPP2CA. Binding to PPP2CA displaces the manganese ion and inactivates the enzyme. The polypeptide is Protein phosphatase methylesterase 1 (Ppme1) (Rattus norvegicus (Rat)).